Here is a 295-residue protein sequence, read N- to C-terminus: Calcium-regulated actin-bundling protein (295 aa).

Monomer.

May contribute to the structure and reorganization of filopodia and pseudopodia accompanying cell movements. This is Calcium-regulated actin-bundling protein (abpB) from Dictyostelium discoideum (Social amoeba).